We begin with the raw amino-acid sequence, 168 residues long: Small ribosomal subunit protein uS8 (168 aa).

Positions 59–93 (EEYKKMKELAEKSPNPKMKRYLKQLEEYNKGTQYP) are not found in other S8 sequences.

Belongs to the universal ribosomal protein uS8 family. As to quaternary structure, part of the 30S ribosomal subunit. Contacts proteins S5 and S12.

In terms of biological role, one of the primary rRNA binding proteins, it binds directly to 16S rRNA central domain where it helps coordinate assembly of the platform of the 30S subunit. In Aquifex aeolicus (strain VF5), this protein is Small ribosomal subunit protein uS8.